Here is a 76-residue protein sequence, read N- to C-terminus: Small ribosomal subunit protein bS18 (76 aa).

This sequence belongs to the bacterial ribosomal protein bS18 family. Part of the 30S ribosomal subunit. Forms a tight heterodimer with protein bS6.

In terms of biological role, binds as a heterodimer with protein bS6 to the central domain of the 16S rRNA, where it helps stabilize the platform of the 30S subunit. The polypeptide is Small ribosomal subunit protein bS18 (Brevibacillus brevis (strain 47 / JCM 6285 / NBRC 100599)).